A 248-amino-acid chain; its full sequence is 14-3-3 protein homolog 2 (248 aa).

This sequence belongs to the 14-3-3 family.

The polypeptide is 14-3-3 protein homolog 2 (Echinococcus multilocularis (Fox tapeworm)).